Reading from the N-terminus, the 133-residue chain is MLSPEAERVLRYLVEVEELAEAVLSDKRQIVDLDTKRNQNREGLRALQKDLSVSEDVMVCFGNMFIKMPHPKTKEMIQKDQEHLDKEIERLRSQLKVKVNRLFEAQGKPELKGFNLNPLSPDEVKALKVILKG.

The protein belongs to the prefoldin subunit beta family. Component of the PAQosome complex which is responsible for the biogenesis of several protein complexes and which consists of R2TP complex members RUVBL1, RUVBL2, RPAP3 and PIH1D1, URI complex members PFDN2, PFDN6, PDRG1, UXT and URI1 as well as ASDURF, POLR2E and DNAAF10/WDR92.

It localises to the cytoplasm. Functionally, may play a role in chaperone-mediated protein folding. The polypeptide is p53 and DNA damage-regulated protein 1 (Pdrg1) (Mus musculus (Mouse)).